A 394-amino-acid chain; its full sequence is Cysteine protease ATG4B (394 aa).

Residue Cys74 is the Nucleophile of the active site. Catalysis depends on residues Asp280 and His282. The short motif at 389–392 is the LIR element; that stretch reads FEIL.

This sequence belongs to the peptidase C54 family.

The protein localises to the cytoplasm. The protein resides in the cytosol. Its subcellular location is the cytoplasmic vesicle. It localises to the autophagosome. It is found in the endoplasmic reticulum. The protein localises to the mitochondrion. The catalysed reaction is [protein]-C-terminal L-amino acid-glycyl-phosphatidylethanolamide + H2O = [protein]-C-terminal L-amino acid-glycine + a 1,2-diacyl-sn-glycero-3-phosphoethanolamine. The enzyme catalyses [protein]-C-terminal L-amino acid-glycyl-phosphatidylserine + H2O = [protein]-C-terminal L-amino acid-glycine + a 1,2-diacyl-sn-glycero-3-phospho-L-serine. Cysteine protease that plays a key role in autophagy by mediating both proteolytic activation and delipidation of ATG8 family proteins. Required for canonical autophagy (macroautophagy), non-canonical autophagy as well as for mitophagy. The protease activity is required for proteolytic activation of ATG8 family proteins: cleaves the C-terminal amino acid of ATG8 proteins to reveal a C-terminal glycine. Exposure of the glycine at the C-terminus is essential for ATG8 proteins conjugation to phosphatidylethanolamine (PE) and insertion to membranes, which is necessary for autophagy. Protease activity is also required to counteract formation of high-molecular weight conjugates of ATG8 proteins (ATG8ylation): acts as a deubiquitinating-like enzyme that removes ATG8 conjugated to other proteins, such as ATG3. In addition to the protease activity, also mediates delipidation of ATG8 family proteins. Catalyzes delipidation of PE-conjugated forms of ATG8 proteins during macroautophagy. Also involved in non-canonical autophagy, a parallel pathway involving conjugation of ATG8 proteins to single membranes at endolysosomal compartments, by catalyzing delipidation of ATG8 proteins conjugated to phosphatidylserine (PS). The polypeptide is Cysteine protease ATG4B (Danio rerio (Zebrafish)).